The following is a 242-amino-acid chain: MTEYWVSQGNKWCEFCKIWIQNNPTSIRNHDLGKRHRECVDKKLTDMRERSAAKDKELKKNEKLLQQIEAKATRSYQKDIATAQQVAKANGAPEDGTSDWMLDSASGYYYNQTNGLHYDSQSGFYYSDSIGHWVTQDEAYAAVKTSSGTKVPLVKKPVSSSGAGPSVGKPPGRLVTASLNPKRAVKGAASSVDLGNNKRKRQDEKPKKVSAEEKAALKAREAARKRVEDREKPLLGLYNRPF.

The Matrin-type zinc-finger motif lies at 11–42 (KWCEFCKIWIQNNPTSIRNHDLGKRHRECVDK). Residues 42-71 (KKLTDMRERSAAKDKELKKNEKLLQQIEAK) are a coiled coil. The interval 154-242 (VKKPVSSSGA…PLLGLYNRPF (89 aa)) is disordered. Residues 155–172 (KKPVSSSGAGPSVGKPPG) show a composition bias toward low complexity. A compositionally biased stretch (basic and acidic residues) spans 201-233 (RQDEKPKKVSAEEKAALKAREAARKRVEDREKP).

As to quaternary structure, component of a pre-mRNA splicing complex. Interacts with STA1. Interacts with PRP31.

It localises to the nucleus. Its subcellular location is the cajal body. In terms of biological role, nucleic acid-binding protein that promotes Pol IV-dependent small interfering RNA (siRNA) accumulation, DNA methylation and transcriptional silencing. May possess both RNA-directed DNA methylation (RdDM)-dependent and -independent roles in transcriptional silencing. Acts as a pre-mRNA splicing factor that associates with several typical components of the splicing machinery as well as with Pol II. The protein is Zinc finger protein ZOP1 of Arabidopsis thaliana (Mouse-ear cress).